Consider the following 283-residue polypeptide: Bifunctional protein FolD (283 aa).

NADP(+) is bound by residues 165 to 167 (GRS), S190, and V231.

It belongs to the tetrahydrofolate dehydrogenase/cyclohydrolase family. Homodimer.

The catalysed reaction is (6R)-5,10-methylene-5,6,7,8-tetrahydrofolate + NADP(+) = (6R)-5,10-methenyltetrahydrofolate + NADPH. It catalyses the reaction (6R)-5,10-methenyltetrahydrofolate + H2O = (6R)-10-formyltetrahydrofolate + H(+). The protein operates within one-carbon metabolism; tetrahydrofolate interconversion. Catalyzes the oxidation of 5,10-methylenetetrahydrofolate to 5,10-methenyltetrahydrofolate and then the hydrolysis of 5,10-methenyltetrahydrofolate to 10-formyltetrahydrofolate. In Bacillus pumilus (strain SAFR-032), this protein is Bifunctional protein FolD.